The following is a 946-amino-acid chain: Bifunctional glutamine synthetase adenylyltransferase/adenylyl-removing enzyme (946 aa).

The adenylyl removase stretch occupies residues 1-440 (MKPLSSPLQQ…VFNELIGDDE (440 aa)). Residues 449-946 (SEHWRELWQD…ASWQKWLVAG (498 aa)) are adenylyl transferase.

The protein belongs to the GlnE family. Mg(2+) serves as cofactor.

The enzyme catalyses [glutamine synthetase]-O(4)-(5'-adenylyl)-L-tyrosine + phosphate = [glutamine synthetase]-L-tyrosine + ADP. It catalyses the reaction [glutamine synthetase]-L-tyrosine + ATP = [glutamine synthetase]-O(4)-(5'-adenylyl)-L-tyrosine + diphosphate. Its function is as follows. Involved in the regulation of glutamine synthetase GlnA, a key enzyme in the process to assimilate ammonia. When cellular nitrogen levels are high, the C-terminal adenylyl transferase (AT) inactivates GlnA by covalent transfer of an adenylyl group from ATP to specific tyrosine residue of GlnA, thus reducing its activity. Conversely, when nitrogen levels are low, the N-terminal adenylyl removase (AR) activates GlnA by removing the adenylyl group by phosphorolysis, increasing its activity. The regulatory region of GlnE binds the signal transduction protein PII (GlnB) which indicates the nitrogen status of the cell. The sequence is that of Bifunctional glutamine synthetase adenylyltransferase/adenylyl-removing enzyme from Citrobacter koseri (strain ATCC BAA-895 / CDC 4225-83 / SGSC4696).